A 310-amino-acid chain; its full sequence is Olfactory receptor 2A1/2A42 (310 aa).

Topologically, residues 1–24 are extracellular; it reads MGENQTMVTEFLLLGFLLGPRIQM. Asparagine 4 is a glycosylation site (N-linked (GlcNAc...) asparagine). Residues 25–48 form a helical membrane-spanning segment; the sequence is LLFGLFSLFYIFTLLGNGAILGLI. At 49 to 56 the chain is on the cytoplasmic side; it reads SLDSRLHT. Residues 57 to 78 form a helical membrane-spanning segment; that stretch reads PMYFFLSHLAVVDIAYTRNTVP. The Extracellular portion of the chain corresponds to 79 to 99; that stretch reads QMLANLLHPAKPISFAGCMTQ. The cysteines at positions 96 and 188 are disulfide-linked. The chain crosses the membrane as a helical span at residues 100–119; that stretch reads TFLCLSFGHSECLLLVLMSY. Topologically, residues 120 to 138 are cytoplasmic; sequence DRYVAICHPLRYSVIMTWR. The chain crosses the membrane as a helical span at residues 139–157; it reads VCITLAVTSWTCGSLLALA. Residues 158 to 195 are Extracellular-facing; the sequence is HVVLILRLPFSGPHEINHFFCEILSVLRLACADTWLNQ. Residues 196 to 218 traverse the membrane as a helical segment; that stretch reads VVIFAACVFFLVGPPSLVLVSYS. Over 219-235 the chain is Cytoplasmic; the sequence is HILAAILRIQSGEGRRK. The helical transmembrane segment at 236–258 threads the bilayer; it reads AFSTCSSHLCVVGLFFGSAIIMY. At 259–271 the chain is on the extracellular side; sequence MAPKSRHPEEQQK. The chain crosses the membrane as a helical span at residues 272–291; that stretch reads VFFLFYSFFNPTLNPLIYSL. Residues 292–310 are Cytoplasmic-facing; sequence RNGEVKGALRRALGKESHS.

The protein belongs to the G-protein coupled receptor 1 family.

The protein resides in the cell membrane. Its function is as follows. Odorant receptor. The chain is Olfactory receptor 2A1/2A42 (OR2A1) from Homo sapiens (Human).